Here is a 98-residue protein sequence, read N- to C-terminus: NADH-ubiquinone oxidoreductase chain 4L (98 aa).

The next 3 helical transmembrane spans lie at 1-21, 27-47, and 61-81; these read MIPT…GMLT, VASL…ATLI, and IILL…LISI.

Belongs to the complex I subunit 4L family. Core subunit of respiratory chain NADH dehydrogenase (Complex I) which is composed of 45 different subunits.

The protein resides in the mitochondrion inner membrane. The catalysed reaction is a ubiquinone + NADH + 5 H(+)(in) = a ubiquinol + NAD(+) + 4 H(+)(out). Core subunit of the mitochondrial membrane respiratory chain NADH dehydrogenase (Complex I) which catalyzes electron transfer from NADH through the respiratory chain, using ubiquinone as an electron acceptor. Part of the enzyme membrane arm which is embedded in the lipid bilayer and involved in proton translocation. This Macaca hecki (Heck's macaque) protein is NADH-ubiquinone oxidoreductase chain 4L (MT-ND4L).